A 478-amino-acid chain; its full sequence is Cytochrome c-552 (478 aa).

The N-terminal stretch at 1-26 is a signal peptide; it reads MTRIKINARRIFSLLIPFFFFTSVHA. Heme c is bound at residue H94. Residues C122, C125, and K126 each contribute to the heme site. Residues C160, C163, H164, C209, C212, and H213 each coordinate heme c. Residues E215, Y216, K261, and Q263 each contribute to the Ca(2+) site. Y216 contacts substrate. Residue H264 participates in substrate binding. The heme c site is built by H275, C282, C285, H286, H301, C314, C317, H318, and H393.

The protein belongs to the cytochrome c-552 family. It depends on Ca(2+) as a cofactor. Heme c serves as cofactor.

The protein resides in the periplasm. The catalysed reaction is 6 Fe(III)-[cytochrome c] + NH4(+) + 2 H2O = 6 Fe(II)-[cytochrome c] + nitrite + 8 H(+). It functions in the pathway nitrogen metabolism; nitrate reduction (assimilation). Its function is as follows. Catalyzes the reduction of nitrite to ammonia, consuming six electrons in the process. The polypeptide is Cytochrome c-552 (Escherichia coli (strain ATCC 8739 / DSM 1576 / NBRC 3972 / NCIMB 8545 / WDCM 00012 / Crooks)).